Reading from the N-terminus, the 564-residue chain is Septation ring formation regulator EzrA (564 aa).

The Extracellular segment spans residues 1–2 (ME). The helical transmembrane segment at 3–21 (FVIGLLALFLILFATGYLF) threads the bilayer. Residues 22–564 (RKNIYKEIDR…RLEADAKQPE (543 aa)) are Cytoplasmic-facing. Coiled-coil stretches lie at residues 99–159 (QKSK…AYSH), 243–281 (KGYK…EAAA), and 310–498 (KVPE…VELV).

It belongs to the EzrA family.

The protein resides in the cell membrane. Functionally, negative regulator of FtsZ ring formation; modulates the frequency and position of FtsZ ring formation. Inhibits FtsZ ring formation at polar sites. Interacts either with FtsZ or with one of its binding partners to promote depolymerization. The sequence is that of Septation ring formation regulator EzrA from Bacillus licheniformis (strain ATCC 14580 / DSM 13 / JCM 2505 / CCUG 7422 / NBRC 12200 / NCIMB 9375 / NCTC 10341 / NRRL NRS-1264 / Gibson 46).